The sequence spans 308 residues: Ribosomal RNA large subunit methyltransferase F (308 aa).

This sequence belongs to the methyltransferase superfamily. METTL16/RlmF family.

Its subcellular location is the cytoplasm. The enzyme catalyses adenosine(1618) in 23S rRNA + S-adenosyl-L-methionine = N(6)-methyladenosine(1618) in 23S rRNA + S-adenosyl-L-homocysteine + H(+). Specifically methylates the adenine in position 1618 of 23S rRNA. The protein is Ribosomal RNA large subunit methyltransferase F of Shigella boydii serotype 18 (strain CDC 3083-94 / BS512).